Here is a 239-residue protein sequence, read N- to C-terminus: Succinate dehydrogenase [ubiquinone] iron-sulfur subunit (239 aa).

Residues 24-99 (AEAKFSVHPI…NANIITIYPL (76 aa)) enclose the 2Fe-2S ferredoxin-type domain. The [2Fe-2S] cluster site is built by Cys-63, Cys-68, Cys-71, and Cys-83. One can recognise a 4Fe-4S ferredoxin-type domain in the interval 142-172 (DRSELNGIYECILCACCSASCPSYWWNHDKY). Residues Cys-152, Cys-155, and Cys-158 each contribute to the [4Fe-4S] cluster site. Cys-162 is a [3Fe-4S] cluster binding site. A ubiquinone is bound at residue Trp-167. [3Fe-4S] cluster-binding residues include Cys-209 and Cys-215. Residue Cys-219 participates in [4Fe-4S] cluster binding.

It belongs to the succinate dehydrogenase/fumarate reductase iron-sulfur protein family. Component of complex II composed of four subunits: a flavoprotein (FP), an iron-sulfur protein (IP), and a cytochrome b composed of a large and a small subunit. The cofactor is [2Fe-2S] cluster. Requires [3Fe-4S] cluster as cofactor. [4Fe-4S] cluster is required as a cofactor.

The protein resides in the mitochondrion inner membrane. It catalyses the reaction a quinone + succinate = fumarate + a quinol. Its pathway is carbohydrate metabolism; tricarboxylic acid cycle; fumarate from succinate (eukaryal route): step 1/1. Iron-sulfur protein (IP) subunit of succinate dehydrogenase (SDH) that is involved in complex II of the mitochondrial electron transport chain and is responsible for transferring electrons from succinate to ubiquinone (coenzyme Q). The protein is Succinate dehydrogenase [ubiquinone] iron-sulfur subunit (SDH2) of Porphyra purpurea (Red seaweed).